Here is a 95-residue protein sequence, read N- to C-terminus: MLKKNKKANSNNSNATAYSPLAYLKRPYFKRSKACPLEQCPNEDIDYKNKTLLSKFTSEYGRILPSRITSVSSRKQRLLSTAVKRARYLALLPYC.

It belongs to the bacterial ribosomal protein bS18 family. As to quaternary structure, part of the 30S ribosomal subunit. Forms a tight heterodimer with protein bS6.

Its function is as follows. Binds as a heterodimer with protein bS6 to the central domain of the 16S rRNA, where it helps stabilize the platform of the 30S subunit. This Ehrlichia canis (strain Jake) protein is Small ribosomal subunit protein bS18.